Here is a 237-residue protein sequence, read N- to C-terminus: tRNA(His) guanylyltransferase (237 aa).

Mg(2+) contacts are provided by Asp29, Gly30, and Asp77. GTP is bound by residues Asp29–His34 and Ser76–Asp77.

The protein belongs to the tRNA(His) guanylyltransferase family. Mg(2+) serves as cofactor.

The catalysed reaction is a 5'-end ribonucleotide-tRNA(His) + GTP + ATP + H2O = a 5'-end phospho-guanosine-ribonucleotide-tRNA(His) + AMP + 2 diphosphate + H(+). Adds a GMP to the 5'-end of tRNA(His) after transcription and RNase P cleavage. The chain is tRNA(His) guanylyltransferase (THG1) from Eremothecium gossypii (strain ATCC 10895 / CBS 109.51 / FGSC 9923 / NRRL Y-1056) (Yeast).